A 160-amino-acid chain; its full sequence is ATP synthase subunit b (160 aa).

A helical membrane pass occupies residues 15 to 35 (LVIVIGLLFWFLRGFLGGILE).

The protein belongs to the ATPase B chain family. In terms of assembly, F-type ATPases have 2 components, F(1) - the catalytic core - and F(0) - the membrane proton channel. F(1) has five subunits: alpha(3), beta(3), gamma(1), delta(1), epsilon(1). F(0) has four main subunits: a(1), b(1), b'(1) and c(10-14). The alpha and beta chains form an alternating ring which encloses part of the gamma chain. F(1) is attached to F(0) by a central stalk formed by the gamma and epsilon chains, while a peripheral stalk is formed by the delta, b and b' chains.

It localises to the cellular thylakoid membrane. In terms of biological role, f(1)F(0) ATP synthase produces ATP from ADP in the presence of a proton or sodium gradient. F-type ATPases consist of two structural domains, F(1) containing the extramembraneous catalytic core and F(0) containing the membrane proton channel, linked together by a central stalk and a peripheral stalk. During catalysis, ATP synthesis in the catalytic domain of F(1) is coupled via a rotary mechanism of the central stalk subunits to proton translocation. Functionally, component of the F(0) channel, it forms part of the peripheral stalk, linking F(1) to F(0). The polypeptide is ATP synthase subunit b (Synechococcus sp. (strain CC9605)).